Here is a 166-residue protein sequence, read N- to C-terminus: Cyclic pyranopterin monophosphate synthase (166 aa).

Residues 83–85 and 121–122 contribute to the substrate site; these read LCH and ME. Aspartate 136 is an active-site residue.

Belongs to the MoaC family. Homohexamer; trimer of dimers.

The enzyme catalyses (8S)-3',8-cyclo-7,8-dihydroguanosine 5'-triphosphate = cyclic pyranopterin phosphate + diphosphate. Its pathway is cofactor biosynthesis; molybdopterin biosynthesis. Its function is as follows. Catalyzes the conversion of (8S)-3',8-cyclo-7,8-dihydroguanosine 5'-triphosphate to cyclic pyranopterin monophosphate (cPMP). This is Cyclic pyranopterin monophosphate synthase from Rhodospirillum rubrum (strain ATCC 11170 / ATH 1.1.1 / DSM 467 / LMG 4362 / NCIMB 8255 / S1).